Reading from the N-terminus, the 101-residue chain is MIPGEILTDDGEHELNAGRATRSLVVANTGDRPVQVGSHYHFFEVNDALSFDRAAARGFRLNIAAGTAVRFEPGQTRTVELVALAGERAVYGFQGKVMGPL.

The protein belongs to the urease beta subunit family. As to quaternary structure, heterotrimer of UreA (gamma), UreB (beta) and UreC (alpha) subunits. Three heterotrimers associate to form the active enzyme.

The protein resides in the cytoplasm. The enzyme catalyses urea + 2 H2O + H(+) = hydrogencarbonate + 2 NH4(+). The protein operates within nitrogen metabolism; urea degradation; CO(2) and NH(3) from urea (urease route): step 1/1. The polypeptide is Urease subunit beta (Burkholderia cenocepacia (strain ATCC BAA-245 / DSM 16553 / LMG 16656 / NCTC 13227 / J2315 / CF5610) (Burkholderia cepacia (strain J2315))).